The chain runs to 408 residues: Lupus La protein (408 aa).

Residues 7 to 99 (NEKMAALEAK…RRSPSKPLPE (93 aa)) enclose the HTH La-type RNA-binding domain. Residues S92 and S94 each carry the phosphoserine modification. The region spanning 111–187 (RSVYIKGFPT…TDLLILFKDD (77 aa)) is the RRM domain. K116 bears the N6-acetyllysine mark. T120 carries the phosphothreonine modification. K128 bears the N6-acetyllysine mark. S225 is subject to Phosphoserine. The 122-residue stretch at 227 to 348 (EEKIGCLLKF…KGKGNKAAQP (122 aa)) folds into the xRRM domain. K328, K341, and K360 each carry N6-acetyllysine. The span at 329–342 (WKSKGRRFKGKGKG) shows a compositional bias: basic residues. The tract at residues 329–408 (WKSKGRRFKG…QKTENGAGDQ (80 aa)) is disordered. T362 is modified (phosphothreonine). S366 is subject to Phosphoserine; by CK2. A compositionally biased stretch (basic and acidic residues) spans 384 to 395 (RAREETDKEEPA).

As to quaternary structure, interacts with DDX15. May interact with RUFY1. In terms of processing, phosphorylated. The phosphorylation sites are at the C-terminal part of the protein. Post-translationally, the N-terminus is blocked.

Its subcellular location is the nucleus. In terms of biological role, binds to the 3' poly(U) terminus of nascent RNA polymerase III transcripts, protecting them from exonuclease digestion and facilitating their folding and maturation. In case of Coxsackievirus B3 infection, binds to the viral internal ribosome entry site (IRES) and stimulates the IRES-mediated translation. This is Lupus La protein (SSB) from Homo sapiens (Human).